Consider the following 449-residue polypeptide: Lipase (449 aa).

A signal peptide spans 1-23 (MGVFDYKNLGTEASKTLFADATA). The tract at residues 58–77 (RQHRLPGSDPPAFPGILTRK) is disordered. The active-site Charge relay system is serine 206. Glycine 318, aspartate 387, and aspartate 396 together coordinate Ca(2+). Hemolysin-type calcium-binding repeat units follow at residues 372-389 (IGSDGNDLIQGGKGADFI) and 390-407 (EGGKGNDTIRDNSGHNTF).

This sequence belongs to the AB hydrolase superfamily. Lipase family.

The catalysed reaction is a triacylglycerol + H2O = a diacylglycerol + a fatty acid + H(+). The chain is Lipase from Pseudomonas fluorescens.